A 501-amino-acid chain; its full sequence is Phenylalanine--tRNA ligase alpha subunit (501 aa).

Residues T340 and F423 each contribute to the L-phenylalanine site. E425 serves as a coordination point for Mg(2+). F448 serves as a coordination point for L-phenylalanine.

This sequence belongs to the class-II aminoacyl-tRNA synthetase family. Phe-tRNA synthetase alpha subunit type 2 subfamily. As to quaternary structure, tetramer of two alpha and two beta subunits. Requires Mg(2+) as cofactor.

Its subcellular location is the cytoplasm. The catalysed reaction is tRNA(Phe) + L-phenylalanine + ATP = L-phenylalanyl-tRNA(Phe) + AMP + diphosphate + H(+). This is Phenylalanine--tRNA ligase alpha subunit from Methanococcus vannielii (strain ATCC 35089 / DSM 1224 / JCM 13029 / OCM 148 / SB).